Consider the following 613-residue polypeptide: UvrABC system protein C (613 aa).

A GIY-YIG domain is found at 13–92 (DKSGVYIMKD…IKKYKPKYNI (80 aa)). A UVR domain is found at 204–239 (DEIINDLRIQMETAAEQLDFEKAAQLRNKITSIKQL).

It belongs to the UvrC family. In terms of assembly, interacts with UvrB in an incision complex.

It is found in the cytoplasm. Its function is as follows. The UvrABC repair system catalyzes the recognition and processing of DNA lesions. UvrC both incises the 5' and 3' sides of the lesion. The N-terminal half is responsible for the 3' incision and the C-terminal half is responsible for the 5' incision. The sequence is that of UvrABC system protein C from Ruminiclostridium cellulolyticum (strain ATCC 35319 / DSM 5812 / JCM 6584 / H10) (Clostridium cellulolyticum).